We begin with the raw amino-acid sequence, 453 residues long: GTPase Der (453 aa).

2 EngA-type G domains span residues 3 to 178 (PKIA…PNNE) and 190 to 363 (LKLA…LECS). Residues 9–16 (GRPNVGKS), 57–61 (DTGGV), 130–133 (NKVD), 196–203 (GRPNAGKS), 243–247 (DTAGI), and 308–311 (NKTD) each bind GTP. A KH-like domain is found at 364-448 (TRINTGVLNR…PIRIRLRSSH (85 aa)).

The protein belongs to the TRAFAC class TrmE-Era-EngA-EngB-Septin-like GTPase superfamily. EngA (Der) GTPase family. In terms of assembly, associates with the 50S ribosomal subunit.

Its function is as follows. GTPase that plays an essential role in the late steps of ribosome biogenesis. The polypeptide is GTPase Der (Lawsonia intracellularis (strain PHE/MN1-00)).